A 106-amino-acid chain; its full sequence is ER membrane protein complex subunit 5 (106 aa).

Over 1–12 (MESSTINAKKIS) the chain is Cytoplasmic. A helical transmembrane segment spans residues 13 to 33 (VLLTLFSIIGYTAYSAHESIL). At 34–46 (EIRQDGKLPLDIK) the chain is on the lumenal side. A helical transmembrane segment spans residues 47–67 (CEVILVTLLFTFTTVIIASPL). The Cytoplasmic portion of the chain corresponds to 68–106 (RSIQLNKWSHQRSDLAFLNSRTNFLRIKELKEKIEKVKN).

This sequence belongs to the membrane magnesium transporter (TC 1.A.67) family. As to quaternary structure, component of the ER membrane protein complex (EMC).

The protein resides in the endoplasmic reticulum membrane. In terms of biological role, the EMC seems to be required for efficient folding of proteins in the endoplasmic reticulum (ER). The polypeptide is ER membrane protein complex subunit 5 (emc5) (Schizosaccharomyces pombe (strain 972 / ATCC 24843) (Fission yeast)).